Consider the following 216-residue polypeptide: Serine acetyltransferase (216 aa).

The protein belongs to the transferase hexapeptide repeat family.

The protein resides in the cytoplasm. The catalysed reaction is L-serine + acetyl-CoA = O-acetyl-L-serine + CoA. It participates in amino-acid biosynthesis; L-cysteine biosynthesis; L-cysteine from L-serine: step 1/2. Its activity is regulated as follows. Inhibited by cysteine. In terms of biological role, catalyzes the acetylation of serine by acetyl-CoA to produce O-acetylserine (OAS). The sequence is that of Serine acetyltransferase from Bacillus licheniformis (strain ATCC 14580 / DSM 13 / JCM 2505 / CCUG 7422 / NBRC 12200 / NCIMB 9375 / NCTC 10341 / NRRL NRS-1264 / Gibson 46).